The sequence spans 461 residues: tRNA modification GTPase MnmE (461 aa).

The (6S)-5-formyl-5,6,7,8-tetrahydrofolate site is built by Arg20, Glu85, and Lys124. One can recognise a TrmE-type G domain in the interval 221–383 (GIPVAIIGET…LQQLLTEVSS (163 aa)). Asn231 contacts K(+). Residues 231–236 (NAGKST), 250–256 (SDIHGTT), and 275–278 (DTAG) each bind GTP. Mg(2+) is bound at residue Ser235. K(+) contacts are provided by Ser250, Ile252, and Thr255. A Mg(2+)-binding site is contributed by Thr256. Lys461 serves as a coordination point for (6S)-5-formyl-5,6,7,8-tetrahydrofolate.

Belongs to the TRAFAC class TrmE-Era-EngA-EngB-Septin-like GTPase superfamily. TrmE GTPase family. As to quaternary structure, homodimer. Heterotetramer of two MnmE and two MnmG subunits. K(+) is required as a cofactor.

It is found in the cytoplasm. In terms of biological role, exhibits a very high intrinsic GTPase hydrolysis rate. Involved in the addition of a carboxymethylaminomethyl (cmnm) group at the wobble position (U34) of certain tRNAs, forming tRNA-cmnm(5)s(2)U34. This chain is tRNA modification GTPase MnmE, found in Parabacteroides distasonis (strain ATCC 8503 / DSM 20701 / CIP 104284 / JCM 5825 / NCTC 11152).